We begin with the raw amino-acid sequence, 268 residues long: Ribosomal RNA small subunit methyltransferase A (268 aa).

Residues N18, L20, G45, E66, D91, and N112 each coordinate S-adenosyl-L-methionine.

It belongs to the class I-like SAM-binding methyltransferase superfamily. rRNA adenine N(6)-methyltransferase family. RsmA subfamily.

It localises to the cytoplasm. It carries out the reaction adenosine(1518)/adenosine(1519) in 16S rRNA + 4 S-adenosyl-L-methionine = N(6)-dimethyladenosine(1518)/N(6)-dimethyladenosine(1519) in 16S rRNA + 4 S-adenosyl-L-homocysteine + 4 H(+). Specifically dimethylates two adjacent adenosines (A1518 and A1519) in the loop of a conserved hairpin near the 3'-end of 16S rRNA in the 30S particle. May play a critical role in biogenesis of 30S subunits. This Shewanella sp. (strain MR-7) protein is Ribosomal RNA small subunit methyltransferase A.